The chain runs to 299 residues: Small ribosomal subunit protein uS3 (299 aa).

The KH type-2 domain occupies 39–107 (VREYLKAKLK…PVAVNIEEVR (69 aa)). The interval 214 to 299 (PVIKTDERED…AVAPGDAKGE (86 aa)) is disordered. Basic and acidic residues predominate over residues 217–248 (KTDEREDDRRNRRGPRSDRPAGDRRPPSRDGA). Over residues 257-282 (ADAGAAAPTDKPADGAAPAAADGPKA) the composition is skewed to low complexity.

The protein belongs to the universal ribosomal protein uS3 family. Part of the 30S ribosomal subunit. Forms a tight complex with proteins S10 and S14.

Functionally, binds the lower part of the 30S subunit head. Binds mRNA in the 70S ribosome, positioning it for translation. The sequence is that of Small ribosomal subunit protein uS3 from Methylibium petroleiphilum (strain ATCC BAA-1232 / LMG 22953 / PM1).